The chain runs to 116 residues: Protein BIC2 (116 aa).

Disordered stretches follow at residues 1–33 and 95–116; these read MKNTNLPEETKEPISPGSSHRKQNKTGTKTCFP and DSGDDAGARGSRPQRLRVESSC.

The protein localises to the nucleus. Regulates the blue-light dependent dimerization of CRY2 and formation of photobodies. Inhibits CRY phosphorylation. This Arabidopsis thaliana (Mouse-ear cress) protein is Protein BIC2.